The following is a 261-amino-acid chain: Indole-3-glycerol phosphate synthase (261 aa).

Belongs to the TrpC family.

The catalysed reaction is 1-(2-carboxyphenylamino)-1-deoxy-D-ribulose 5-phosphate + H(+) = (1S,2R)-1-C-(indol-3-yl)glycerol 3-phosphate + CO2 + H2O. It participates in amino-acid biosynthesis; L-tryptophan biosynthesis; L-tryptophan from chorismate: step 4/5. This chain is Indole-3-glycerol phosphate synthase, found in Campylobacter concisus (strain 13826).